The sequence spans 157 residues: Transcription antitermination protein NusB (157 aa).

It belongs to the NusB family.

In terms of biological role, involved in transcription antitermination. Required for transcription of ribosomal RNA (rRNA) genes. Binds specifically to the boxA antiterminator sequence of the ribosomal RNA (rrn) operons. The protein is Transcription antitermination protein NusB of Xylella fastidiosa (strain 9a5c).